Reading from the N-terminus, the 515-residue chain is Putative ammonium transporter 2 (515 aa).

The next 12 membrane-spanning stretches (helical) occupy residues 34-54 (GVWMMASSFIIFTMTAGFGLL), 72-92 (VFDVIFGGLAYWMFGYGLTFG), 124-144 (GISYSLFIFQMSFATTTSTIV), 156-176 (SHCFISFFITLVHSVAGHWVW), 191-211 (AGCSAVHLVGGVSGLVATLYL), 226-246 (VSDPTKAILGFLMIWWGWLAF), 266-286 (AVGTILASAGGGVVTVIITRL), 291-311 (IQMDMLIDGMLASLVASTGGC), 321-337 (LVGAIGSSLALAAYPVT), 346-366 (VGVFPVHVVGSIWGMIAPAIF), 381-401 (FQTSDEINGLLYGGGFYLLFL), and 404-424 (FVILVIGTYSAICAFIILFLI).

The protein belongs to the ammonia transporter channel (TC 1.A.11.2) family.

Its subcellular location is the membrane. Its function is as follows. Involved in the uptake of ammonia. Implicated in aging. This is Putative ammonium transporter 2 (amt-2) from Caenorhabditis elegans.